The following is a 146-amino-acid chain: Hemoglobin subunit beta (146 aa).

Val1 carries the N-acetylvaline modification. The Globin domain maps to 2–146; that stretch reads HLTPEEKNAV…VANALAHKYH (145 aa). Residue Thr12 is modified to Phosphothreonine. A Phosphoserine modification is found at Ser44. Lys59 bears the N6-acetyllysine mark. His63 lines the heme b pocket. Lys82 bears the N6-acetyllysine mark. Residue His92 coordinates heme b. Cys93 carries the post-translational modification S-nitrosocysteine. N6-acetyllysine is present on Lys144.

This sequence belongs to the globin family. In terms of assembly, heterotetramer of two alpha chains and two beta chains. Red blood cells.

In terms of biological role, involved in oxygen transport from the lung to the various peripheral tissues. This chain is Hemoglobin subunit beta (HBB), found in Theropithecus gelada (Gelada baboon).